Reading from the N-terminus, the 181-residue chain is Large ribosomal subunit protein uL5 (181 aa).

This sequence belongs to the universal ribosomal protein uL5 family. As to quaternary structure, part of the 50S ribosomal subunit; part of the 5S rRNA/L5/L18/L25 subcomplex. Contacts the 5S rRNA and the P site tRNA. Forms a bridge to the 30S subunit in the 70S ribosome.

This is one of the proteins that bind and probably mediate the attachment of the 5S RNA into the large ribosomal subunit, where it forms part of the central protuberance. In the 70S ribosome it contacts protein S13 of the 30S subunit (bridge B1b), connecting the 2 subunits; this bridge is implicated in subunit movement. Contacts the P site tRNA; the 5S rRNA and some of its associated proteins might help stabilize positioning of ribosome-bound tRNAs. The sequence is that of Large ribosomal subunit protein uL5 from Desulforamulus reducens (strain ATCC BAA-1160 / DSM 100696 / MI-1) (Desulfotomaculum reducens).